Reading from the N-terminus, the 828-residue chain is DNA gyrase subunit A (828 aa).

A Topo IIA-type catalytic domain is found at 32–497 (LPDVRDGLKP…EVLSLEDEDL (466 aa)). Tyrosine 120 serves as the catalytic O-(5'-phospho-DNA)-tyrosine intermediate. The GyrA-box signature appears at 524 to 530 (QKRGGRG).

Belongs to the type II topoisomerase GyrA/ParC subunit family. Heterotetramer, composed of two GyrA and two GyrB chains. In the heterotetramer, GyrA contains the active site tyrosine that forms a transient covalent intermediate with DNA, while GyrB binds cofactors and catalyzes ATP hydrolysis.

The protein resides in the cytoplasm. It catalyses the reaction ATP-dependent breakage, passage and rejoining of double-stranded DNA.. Functionally, a type II topoisomerase that negatively supercoils closed circular double-stranded (ds) DNA in an ATP-dependent manner to modulate DNA topology and maintain chromosomes in an underwound state. Negative supercoiling favors strand separation, and DNA replication, transcription, recombination and repair, all of which involve strand separation. Also able to catalyze the interconversion of other topological isomers of dsDNA rings, including catenanes and knotted rings. Type II topoisomerases break and join 2 DNA strands simultaneously in an ATP-dependent manner. This is DNA gyrase subunit A from Streptococcus pyogenes serotype M6 (strain ATCC BAA-946 / MGAS10394).